A 206-amino-acid chain; its full sequence is 2-oxoglutarate-dependent dioxygenase iboH (206 aa).

One can recognise a Fe2OG dioxygenase domain in the interval 51–157 (PSTTTLVLLH…RYSIAYFLRP (107 aa)). Residues His-75, Asp-77, and His-134 each coordinate Fe cation. Arg-148 lines the 2-oxoglutarate pocket.

Belongs to the iron/ascorbate-dependent oxidoreductase family. It depends on Fe(2+) as a cofactor.

It catalyses the reaction L-glutamate + 2-oxoglutarate + O2 = (3R)-3-hydroxy-L-glutamate + succinate + CO2. The protein operates within secondary metabolite biosynthesis. Functionally, 2-oxoglutarate-dependent dioxygenase; part of the gene cluster that mediates the biosynthesis of the psychoactive metabolites ibotenic acid and muscimol. The first committed step is glutamate hydroxylation by the 2-oxoglutarate-dependent dioxygenase iboH, and the last step is decarboxylation of ibotenic acid to muscimol by the decarboxylase iboD. The order of the intermediate reactions is somewhat ambiguous. IboA likely activates the carboxylic acid at position 5 to introduce an amide bond, and the flavin monooxygenase iboF generates the N-O bond. There are several options for the latter step. One option is that iboF directly hydroxylates the amide nitrogen formed by iboA to produce a hydroxamic acid species. Another option is that iboF hydroxylates an external N-containing compound, whose resulting N-O bond is subsequently introduced into the hydroxyglutamate scaffold. The paralogous PLP-dependent cystathionine gamma-synthase-like enzymes iboG1 and iboG2 are likely involved in substitution of the OH group at position 3 by the O-N moiety. The first cyclic intermediate is most probably tricholomic acid which is likely desaturated to ibotenic acid by the cytochrome P450 monooxygenase iboC. This Amanita muscaria (strain Koide BX008) protein is 2-oxoglutarate-dependent dioxygenase iboH.